A 177-amino-acid chain; its full sequence is ATP synthase subunit b (177 aa).

Residues 35 to 55 (FFVVLAIFLIVLAVIGTFVVP) form a helical membrane-spanning segment.

This sequence belongs to the ATPase B chain family. In terms of assembly, F-type ATPases have 2 components, F(1) - the catalytic core - and F(0) - the membrane proton channel. F(1) has five subunits: alpha(3), beta(3), gamma(1), delta(1), epsilon(1). F(0) has three main subunits: a(1), b(2) and c(10-14). The alpha and beta chains form an alternating ring which encloses part of the gamma chain. F(1) is attached to F(0) by a central stalk formed by the gamma and epsilon chains, while a peripheral stalk is formed by the delta and b chains.

Its subcellular location is the cell membrane. Functionally, f(1)F(0) ATP synthase produces ATP from ADP in the presence of a proton or sodium gradient. F-type ATPases consist of two structural domains, F(1) containing the extramembraneous catalytic core and F(0) containing the membrane proton channel, linked together by a central stalk and a peripheral stalk. During catalysis, ATP synthesis in the catalytic domain of F(1) is coupled via a rotary mechanism of the central stalk subunits to proton translocation. Component of the F(0) channel, it forms part of the peripheral stalk, linking F(1) to F(0). This Mycobacteroides abscessus (strain ATCC 19977 / DSM 44196 / CCUG 20993 / CIP 104536 / JCM 13569 / NCTC 13031 / TMC 1543 / L948) (Mycobacterium abscessus) protein is ATP synthase subunit b.